The primary structure comprises 269 residues: Protein MrkE (269 aa).

The 115-residue stretch at 59-173 folds into the Response regulatory domain; the sequence is KVIIVEDEFL…RIINMLQKLT (115 aa). D110 is subject to 4-aspartylphosphate. One can recognise an HTH LytTR-type domain in the interval 197–269; that stretch reads INLIKDERII…VAQVSIANRF (73 aa).

Functionally, may be involved in the regulation of fimbrial expression. This chain is Protein MrkE (mrkE), found in Klebsiella pneumoniae.